A 216-amino-acid polypeptide reads, in one-letter code: MRIILLGPPGAGKGTQAVGIVEKYNIPHISTGDIFRKNIKEGTELGKKAKEYMDQGLLVPDELTVGLVTDRISQEDCKNGFMLDGFPRNVAQGEHLDIFLKNAGISLDKVVNIEVDKSILVSRAVGRRICKSCGATYHVEFNPPKVEGVCDVCQGELYQRADDNEETVSKRIQVYLDETKPLVDYYSKQGIIADIKGDQAIDKVFEDIVAALGSGK.

10 to 15 (GAGKGT) contacts ATP. The NMP stretch occupies residues 30 to 59 (STGDIFRKNIKEGTELGKKAKEYMDQGLLV). AMP-binding positions include Thr31, Arg36, 57-59 (LLV), 85-88 (GFPR), and Gln92. The tract at residues 126–163 (GRRICKSCGATYHVEFNPPKVEGVCDVCQGELYQRADD) is LID. Residue Arg127 coordinates ATP. Residues Cys130 and Cys133 each coordinate Zn(2+). 136-137 (TY) serves as a coordination point for ATP. The Zn(2+) site is built by Cys150 and Cys153. AMP is bound by residues Arg160 and Arg171. Residue Gln199 coordinates ATP.

The protein belongs to the adenylate kinase family. In terms of assembly, monomer.

The protein localises to the cytoplasm. The enzyme catalyses AMP + ATP = 2 ADP. Its pathway is purine metabolism; AMP biosynthesis via salvage pathway; AMP from ADP: step 1/1. In terms of biological role, catalyzes the reversible transfer of the terminal phosphate group between ATP and AMP. Plays an important role in cellular energy homeostasis and in adenine nucleotide metabolism. The sequence is that of Adenylate kinase from Clostridioides difficile (strain 630) (Peptoclostridium difficile).